Reading from the N-terminus, the 124-residue chain is Fluoride-specific ion channel FluC (124 aa).

4 consecutive transmembrane segments (helical) span residues 1–21 (MIAL…LRFA), 37–57 (GTLA…GLFL), 69–89 (GLIV…LDTV), and 99–119 (LALG…WAGL). Na(+)-binding residues include G76 and T79.

This sequence belongs to the fluoride channel Fluc/FEX (TC 1.A.43) family.

The protein localises to the cell inner membrane. The catalysed reaction is fluoride(in) = fluoride(out). With respect to regulation, na(+) is not transported, but it plays an essential structural role and its presence is essential for fluoride channel function. Its function is as follows. Fluoride-specific ion channel. Important for reducing fluoride concentration in the cell, thus reducing its toxicity. The chain is Fluoride-specific ion channel FluC from Pseudomonas putida (strain ATCC 700007 / DSM 6899 / JCM 31910 / BCRC 17059 / LMG 24140 / F1).